The following is a 239-amino-acid chain: Ribosomal RNA small subunit methyltransferase G (239 aa).

Residues glycine 79, phenylalanine 84, 130–131, and arginine 149 each bind S-adenosyl-L-methionine; that span reads AE.

Belongs to the methyltransferase superfamily. RNA methyltransferase RsmG family.

The protein localises to the cytoplasm. In terms of biological role, specifically methylates the N7 position of a guanine in 16S rRNA. In Lactobacillus delbrueckii subsp. bulgaricus (strain ATCC BAA-365 / Lb-18), this protein is Ribosomal RNA small subunit methyltransferase G.